We begin with the raw amino-acid sequence, 156 residues long: Endoribonuclease YbeY (156 aa).

His122, His126, and His132 together coordinate Zn(2+).

Belongs to the endoribonuclease YbeY family. Requires Zn(2+) as cofactor.

The protein localises to the cytoplasm. Single strand-specific metallo-endoribonuclease involved in late-stage 70S ribosome quality control and in maturation of the 3' terminus of the 16S rRNA. The sequence is that of Endoribonuclease YbeY from Bacillus cereus (strain ZK / E33L).